We begin with the raw amino-acid sequence, 172 residues long: Large ribosomal subunit protein uL10 (172 aa).

The protein belongs to the universal ribosomal protein uL10 family. In terms of assembly, part of the ribosomal stalk of the 50S ribosomal subunit. The N-terminus interacts with L11 and the large rRNA to form the base of the stalk. The C-terminus forms an elongated spine to which L12 dimers bind in a sequential fashion forming a multimeric L10(L12)X complex.

Functionally, forms part of the ribosomal stalk, playing a central role in the interaction of the ribosome with GTP-bound translation factors. This chain is Large ribosomal subunit protein uL10, found in Methylorubrum extorquens (strain CM4 / NCIMB 13688) (Methylobacterium extorquens).